The chain runs to 179 residues: Ribosome maturation factor RimM (179 aa).

The PRC barrel domain maps to 103 to 176 (EPDTYYDHQL…IVEIDPPKGL (74 aa)).

The protein belongs to the RimM family. Binds ribosomal protein uS19.

The protein resides in the cytoplasm. Functionally, an accessory protein needed during the final step in the assembly of 30S ribosomal subunit, possibly for assembly of the head region. Essential for efficient processing of 16S rRNA. May be needed both before and after RbfA during the maturation of 16S rRNA. It has affinity for free ribosomal 30S subunits but not for 70S ribosomes. This is Ribosome maturation factor RimM from Mycobacterium leprae (strain Br4923).